The chain runs to 1375 residues: Mediator of RNA polymerase II transcription subunit 13 (1375 aa).

The disordered stretch occupies residues 1 to 51 (MKASEMARPPMRPGNPHAFASPATTPSRTASPNNAQGANVRTTQGGNQAGA). Polar residues predominate over residues 22–51 (PATTPSRTASPNNAQGANVRTTQGGNQAGA). 2 coiled-coil regions span residues 182–216 (ADDSNRRTSKKKAKMDSLEQNIEKWRMSVQRWLSR) and 297–324 (QLERDKILDMQRKAKKAEEDAMRRKDEA). Residues 313-324 (AEEDAMRRKDEA) are compositionally biased toward basic and acidic residues. Disordered stretches follow at residues 313-333 (AEEDAMRRKDEAPGLYPSSPF), 350-370 (YPTPPDGIVPGTGISSTDTPS), 397-417 (YTTTDNQQHASTSPTFPAPLE), 537-581 (ATSP…PASL), 660-689 (RAVSDDSASDSESETSDMSEGSPEDPVDTH), 841-862 (QAKGQQRPPPRKPNESNAIPSN), and 1233-1285 (TPTT…AADP). The segment covering 397–411 (YTTTDNQQHASTSPT) has biased composition (polar residues). Over residues 666–685 (SASDSESETSDMSEGSPEDP) the composition is skewed to acidic residues. A compositionally biased stretch (polar residues) spans 1233–1259 (TPTTPAPSNSSAQANTNTPGSTPQTGV).

It belongs to the Mediator complex subunit 13 family. As to quaternary structure, component of the SRB8-11 complex, which itself associates with the Mediator complex.

Its subcellular location is the nucleus. Component of the SRB8-11 complex. The SRB8-11 complex is a regulatory module of the Mediator complex which is itself involved in regulation of basal and activated RNA polymerase II-dependent transcription. The SRB8-11 complex may be involved in the transcriptional repression of a subset of genes regulated by Mediator. It may inhibit the association of the Mediator complex with RNA polymerase II to form the holoenzyme complex. This Phaeosphaeria nodorum (strain SN15 / ATCC MYA-4574 / FGSC 10173) (Glume blotch fungus) protein is Mediator of RNA polymerase II transcription subunit 13 (SSN2).